The primary structure comprises 373 residues: tRNA-specific 2-thiouridylase MnmA (373 aa).

ATP contacts are provided by residues 12–19 and Met-38; that span reads GMSGGVDS. Positions 98 to 100 are interaction with target base in tRNA; that stretch reads NPD. The active-site Nucleophile is the Cys-103. Cys-103 and Cys-200 are joined by a disulfide. Gly-127 contacts ATP. An interaction with tRNA region spans residues 150–152; the sequence is KDQ. The active-site Cysteine persulfide intermediate is Cys-200. Residues 312–313 are interaction with tRNA; the sequence is RY.

Belongs to the MnmA/TRMU family.

It is found in the cytoplasm. It catalyses the reaction S-sulfanyl-L-cysteinyl-[protein] + uridine(34) in tRNA + AH2 + ATP = 2-thiouridine(34) in tRNA + L-cysteinyl-[protein] + A + AMP + diphosphate + H(+). Functionally, catalyzes the 2-thiolation of uridine at the wobble position (U34) of tRNA, leading to the formation of s(2)U34. This chain is tRNA-specific 2-thiouridylase MnmA, found in Streptococcus pneumoniae (strain CGSP14).